Consider the following 200-residue polypeptide: Probable molybdenum cofactor guanylyltransferase (200 aa).

GTP is bound by residues 9 to 11 (LAG), lysine 21, aspartate 69, and aspartate 100. Residue aspartate 100 participates in Mg(2+) binding.

This sequence belongs to the MobA family. Mg(2+) serves as cofactor.

Its subcellular location is the cytoplasm. The catalysed reaction is Mo-molybdopterin + GTP + H(+) = Mo-molybdopterin guanine dinucleotide + diphosphate. Functionally, transfers a GMP moiety from GTP to Mo-molybdopterin (Mo-MPT) cofactor (Moco or molybdenum cofactor) to form Mo-molybdopterin guanine dinucleotide (Mo-MGD) cofactor. The chain is Probable molybdenum cofactor guanylyltransferase from Bacillus thuringiensis (strain Al Hakam).